The sequence spans 507 residues: Congo red hypersensitive protein 1 (507 aa).

The N-terminal stretch at 1–22 (MKVLDLLTVLSASSLLSTFAAA) is a signal peptide. Positions 34 to 260 (ASSTASCNPL…KVIVTDYSTG (227 aa)) constitute a GH16 domain. C40 and C48 form a disulfide bridge. N-linked (GlcNAc...) asparagine glycosylation occurs at N117. Residue E134 is the Nucleophile of the active site. E138 functions as the Proton donor in the catalytic mechanism. E138 provides a ligand contact to chitin. N177 and N201 each carry an N-linked (GlcNAc...) asparagine glycan. The chitin site is built by W219 and T230. Disordered stretches follow at residues 329-368 (SSSA…SSKT) and 381-478 (SSFE…TNSV). Low complexity-rich tracts occupy residues 381-439 (SSFE…PVQD) and 451-477 (TSST…STNS). N482 is lipidated: GPI-anchor amidated asparagine. Positions 483-507 (GADLAQSLPREGKLFSVLVALLALL) are cleaved as a propeptide — removed in mature form.

The protein belongs to the glycosyl hydrolase 16 family. CRH1 subfamily. The GPI-anchor is attached to the protein in the endoplasmic reticulum and serves to target the protein to the cell surface. There, the glucosamine-inositol phospholipid moiety is cleaved off and the GPI-modified mannoprotein is covalently attached via its lipidless GPI glycan remnant to the 1,6-beta-glucan of the outer cell wall layer.

The protein localises to the secreted. The protein resides in the cell wall. Its subcellular location is the membrane. It carries out the reaction Random endo-hydrolysis of N-acetyl-beta-D-glucosaminide (1-&gt;4)-beta-linkages in chitin and chitodextrins.. Dual chitinase/transglycosylase that plays a role in cell wall architecture. Chitinase and transglycosylase activities are coupled. Required for the polysaccharide cross-linking at the septa and the cell wall. More specifically, transfers chitin to both beta(1-3)- and beta(1-6)glucan in the cell wall. The minimal number of intact hexopyranose units required in the molecule of the acceptor oligosaccharide is two and the effectivity of the acceptor increased with the increasing length of its oligosaccharide chain. The chain is Congo red hypersensitive protein 1 from Saccharomyces cerevisiae (strain ATCC 204508 / S288c) (Baker's yeast).